Reading from the N-terminus, the 131-residue chain is Ribosome-binding factor A (131 aa).

The protein belongs to the RbfA family. Monomer. Binds 30S ribosomal subunits, but not 50S ribosomal subunits or 70S ribosomes.

The protein resides in the cytoplasm. Its function is as follows. One of several proteins that assist in the late maturation steps of the functional core of the 30S ribosomal subunit. Associates with free 30S ribosomal subunits (but not with 30S subunits that are part of 70S ribosomes or polysomes). Required for efficient processing of 16S rRNA. May interact with the 5'-terminal helix region of 16S rRNA. This is Ribosome-binding factor A from Ruegeria sp. (strain TM1040) (Silicibacter sp.).